Reading from the N-terminus, the 316-residue chain is Elongation factor Ts, mitochondrial (316 aa).

Residues 1-18 (MFARAPFVRLLSTTSRNL) constitute a mitochondrion transit peptide. The interval 245–269 (EAAESVKTQEGLRSQEGHDPNADPV) is disordered.

The protein belongs to the EF-Ts family.

It localises to the mitochondrion. Functionally, associates with the EF-Tu.GDP complex and induces the exchange of GDP to GTP. It remains bound to the aminoacyl-tRNA.EF-Tu.GTP complex up to the GTP hydrolysis stage on the ribosome. In Caenorhabditis elegans, this protein is Elongation factor Ts, mitochondrial.